Reading from the N-terminus, the 154-residue chain is Myoglobin (154 aa).

Residues 2–148 enclose the Globin domain; that stretch reads VLSDGEWQLV…FRKDIAAKYK (147 aa). S4 bears the Phosphoserine mark. A nitrite-binding site is contributed by H65. Position 65 (H65) interacts with O2. Phosphothreonine is present on T68. Heme b is bound at residue H94.

It belongs to the globin family. As to quaternary structure, monomeric.

It localises to the cytoplasm. Its subcellular location is the sarcoplasm. It carries out the reaction Fe(III)-heme b-[protein] + nitric oxide + H2O = Fe(II)-heme b-[protein] + nitrite + 2 H(+). It catalyses the reaction H2O2 + AH2 = A + 2 H2O. Its function is as follows. Monomeric heme protein which primary function is to store oxygen and facilitate its diffusion within muscle tissues. Reversibly binds oxygen through a pentacoordinated heme iron and enables its timely and efficient release as needed during periods of heightened demand. Depending on the oxidative conditions of tissues and cells, and in addition to its ability to bind oxygen, it also has a nitrite reductase activity whereby it regulates the production of bioactive nitric oxide. Under stress conditions, like hypoxia and anoxia, it also protects cells against reactive oxygen species thanks to its pseudoperoxidase activity. The sequence is that of Myoglobin from Balaena mysticetus (Bowhead whale).